Here is a 697-residue protein sequence, read N- to C-terminus: Elongation factor G (697 aa).

The tr-type G domain maps to Glu10–Leu285. GTP is bound by residues Ala19 to Thr26, Asp83 to His87, and Asn137 to Asp140.

The protein belongs to the TRAFAC class translation factor GTPase superfamily. Classic translation factor GTPase family. EF-G/EF-2 subfamily.

The protein localises to the cytoplasm. Functionally, catalyzes the GTP-dependent ribosomal translocation step during translation elongation. During this step, the ribosome changes from the pre-translocational (PRE) to the post-translocational (POST) state as the newly formed A-site-bound peptidyl-tRNA and P-site-bound deacylated tRNA move to the P and E sites, respectively. Catalyzes the coordinated movement of the two tRNA molecules, the mRNA and conformational changes in the ribosome. This is Elongation factor G from Ligilactobacillus salivarius (strain UCC118) (Lactobacillus salivarius).